The sequence spans 289 residues: tRNA U34 carboxymethyltransferase (289 aa).

Residues lysine 60, tryptophan 74, lysine 79, glycine 98, 120–122, 147–148, tyrosine 167, and arginine 282 each bind carboxy-S-adenosyl-L-methionine; these read DPS and VE.

It belongs to the class I-like SAM-binding methyltransferase superfamily. CmoB family. In terms of assembly, homotetramer.

It catalyses the reaction carboxy-S-adenosyl-L-methionine + 5-hydroxyuridine(34) in tRNA = 5-carboxymethoxyuridine(34) in tRNA + S-adenosyl-L-homocysteine + H(+). Functionally, catalyzes carboxymethyl transfer from carboxy-S-adenosyl-L-methionine (Cx-SAM) to 5-hydroxyuridine (ho5U) to form 5-carboxymethoxyuridine (cmo5U) at position 34 in tRNAs. This is tRNA U34 carboxymethyltransferase from Campylobacter concisus (strain 13826).